A 313-amino-acid polypeptide reads, in one-letter code: Olfactory receptor 10P1 (313 aa).

Residues 1 to 25 (MAGENHTTLPEFLLLGFSDLKALQG) lie on the Extracellular side of the membrane. Asn5 carries N-linked (GlcNAc...) asparagine glycosylation. The helical transmembrane segment at 26 to 46 (PLFWVVLLVYLVTLLGNSLII) threads the bilayer. Topologically, residues 47 to 54 (LLTQVSPA) are cytoplasmic. A helical transmembrane segment spans residues 55–75 (LHSPMYFFLRQLSVVELFYTT). Topologically, residues 76-100 (DIVPRTLANLGSPHPQAISFQGCAA) are extracellular. The chain crosses the membrane as a helical span at residues 101 to 121 (QMYVFIVLGISECCLLTAMAY). The Cytoplasmic portion of the chain corresponds to 122–140 (DRYVAICQPLRYSTLLSPR). The helical transmembrane segment at 141–161 (ACMAMVGTSWLTGIITATTHA) threads the bilayer. At 162–198 (SLIFSLPFRSHPIIPHFLCDILPVLRLASAGKHRSEI) the chain is on the extracellular side. Residues 199-218 (SVMTATIVFIMIPFSLIVTS) traverse the membrane as a helical segment. Over 219–238 (YIRILGAILAMASTQSRRKV) the chain is Cytoplasmic. The chain crosses the membrane as a helical span at residues 239–259 (FSTCSSHLLVVSLFFGTASIT). At 260–272 (YIRPQAGSSVTTD) the chain is on the extracellular side. The helical transmembrane segment at 273–293 (RVLSLFYTVITPMLNPIIYTL) threads the bilayer. The Cytoplasmic portion of the chain corresponds to 294 to 313 (RNKDVRRALRHLVKRQRPSP).

Belongs to the G-protein coupled receptor 1 family.

It localises to the cell membrane. In terms of biological role, odorant receptor. This chain is Olfactory receptor 10P1 (OR10P1), found in Homo sapiens (Human).